We begin with the raw amino-acid sequence, 138 residues long: ATP synthase epsilon chain 1 (138 aa).

It belongs to the ATPase epsilon chain family. As to quaternary structure, F-type ATPases have 2 components, CF(1) - the catalytic core - and CF(0) - the membrane proton channel. CF(1) has five subunits: alpha(3), beta(3), gamma(1), delta(1), epsilon(1). CF(0) has three main subunits: a, b and c.

The protein localises to the cell inner membrane. In terms of biological role, produces ATP from ADP in the presence of a proton gradient across the membrane. This Syntrophotalea carbinolica (strain DSM 2380 / NBRC 103641 / GraBd1) (Pelobacter carbinolicus) protein is ATP synthase epsilon chain 1.